We begin with the raw amino-acid sequence, 544 residues long: CTP synthase (544 aa).

An amidoligase domain region spans residues 1-267 (MAKFVFITGG…CREVLDVLDL (267 aa)). Serine 13 is a CTP binding site. A UTP-binding site is contributed by serine 13. Residues 14-19 (SIGKGI) and aspartate 71 each bind ATP. Positions 71 and 141 each coordinate Mg(2+). CTP-binding positions include 148 to 150 (DIE), 188 to 193 (KTKPTQ), and lysine 224. Residues 188-193 (KTKPTQ) and lysine 224 contribute to the UTP site. In terms of domain architecture, Glutamine amidotransferase type-1 spans 292 to 534 (KVALVGKYIQ…IEAAQQRLPS (243 aa)). Glycine 354 contacts L-glutamine. The active-site Nucleophile; for glutamine hydrolysis is the cysteine 381. L-glutamine is bound by residues 382–385 (LGMQ), glutamate 405, and arginine 462. Residues histidine 507 and glutamate 509 contribute to the active site.

The protein belongs to the CTP synthase family. In terms of assembly, homotetramer.

The enzyme catalyses UTP + L-glutamine + ATP + H2O = CTP + L-glutamate + ADP + phosphate + 2 H(+). It carries out the reaction L-glutamine + H2O = L-glutamate + NH4(+). It catalyses the reaction UTP + NH4(+) + ATP = CTP + ADP + phosphate + 2 H(+). It participates in pyrimidine metabolism; CTP biosynthesis via de novo pathway; CTP from UDP: step 2/2. Allosterically activated by GTP, when glutamine is the substrate; GTP has no effect on the reaction when ammonia is the substrate. The allosteric effector GTP functions by stabilizing the protein conformation that binds the tetrahedral intermediate(s) formed during glutamine hydrolysis. Inhibited by the product CTP, via allosteric rather than competitive inhibition. In terms of biological role, catalyzes the ATP-dependent amination of UTP to CTP with either L-glutamine or ammonia as the source of nitrogen. Regulates intracellular CTP levels through interactions with the four ribonucleotide triphosphates. In Parasynechococcus marenigrum (strain WH8102), this protein is CTP synthase.